A 184-amino-acid polypeptide reads, in one-letter code: Large ribosomal subunit protein uL6 (184 aa).

It belongs to the universal ribosomal protein uL6 family. In terms of assembly, part of the 50S ribosomal subunit.

This protein binds to the 23S rRNA, and is important in its secondary structure. It is located near the subunit interface in the base of the L7/L12 stalk, and near the tRNA binding site of the peptidyltransferase center. The sequence is that of Large ribosomal subunit protein uL6 from Cytophaga hutchinsonii (strain ATCC 33406 / DSM 1761 / CIP 103989 / NBRC 15051 / NCIMB 9469 / D465).